A 452-amino-acid chain; its full sequence is Phosphoglucosamine mutase (452 aa).

Serine 103 (phosphoserine intermediate) is an active-site residue. Mg(2+)-binding residues include serine 103, aspartate 244, aspartate 246, and aspartate 248. Residue serine 103 is modified to Phosphoserine.

It belongs to the phosphohexose mutase family. Mg(2+) is required as a cofactor. Post-translationally, activated by phosphorylation.

The catalysed reaction is alpha-D-glucosamine 1-phosphate = D-glucosamine 6-phosphate. Its function is as follows. Catalyzes the conversion of glucosamine-6-phosphate to glucosamine-1-phosphate. The polypeptide is Phosphoglucosamine mutase (Fusobacterium nucleatum subsp. nucleatum (strain ATCC 25586 / DSM 15643 / BCRC 10681 / CIP 101130 / JCM 8532 / KCTC 2640 / LMG 13131 / VPI 4355)).